We begin with the raw amino-acid sequence, 138 residues long: Translation initiation factor 5A (138 aa).

The residue at position 37 (lysine 37) is a Hypusine.

This sequence belongs to the eIF-5A family.

It localises to the cytoplasm. Functionally, functions by promoting the formation of the first peptide bond. The protein is Translation initiation factor 5A (eIF5A) of Thermococcus sibiricus (strain DSM 12597 / MM 739).